A 592-amino-acid chain; its full sequence is Vacuolin-B (592 aa).

Positions 1 to 30 (MIESSSFMKKTSSENSIGSRSNIHEASTFS) are enriched in polar residues. Residues 1-35 (MIESSSFMKKTSSENSIGSRSNIHEASTFSSEHEN) are disordered. Residues 480-534 (KTTEARLKAETDNIALEQKGKAIIAEAQAKLESAQKQAQALLITAEAQKKVQEMQ) are a coiled coil. The segment at 491–555 (DNIALEQKGK…EIELAKIKSE (65 aa)) is oligomerization domain.

It belongs to the vacuolin family. Homotrimer.

It localises to the endosome membrane. The protein resides in the lysosome membrane. Negative regulator of late steps of the endocytic pathway. This chain is Vacuolin-B (vacB), found in Dictyostelium discoideum (Social amoeba).